A 387-amino-acid polypeptide reads, in one-letter code: Cysteine desulfurase IscS (387 aa).

Pyridoxal 5'-phosphate contacts are provided by residues 73–74 (AT), Asn-155, Gln-183, and 203–205 (SAH). An N6-(pyridoxal phosphate)lysine modification is found at Lys-206. Thr-241 contacts pyridoxal 5'-phosphate. The Cysteine persulfide intermediate role is filled by Cys-328. Residue Cys-328 participates in [2Fe-2S] cluster binding.

It belongs to the class-V pyridoxal-phosphate-dependent aminotransferase family. NifS/IscS subfamily. In terms of assembly, homodimer. Forms a heterotetramer with IscU, interacts with other sulfur acceptors. The cofactor is pyridoxal 5'-phosphate.

It localises to the cytoplasm. It carries out the reaction (sulfur carrier)-H + L-cysteine = (sulfur carrier)-SH + L-alanine. It functions in the pathway cofactor biosynthesis; iron-sulfur cluster biosynthesis. Its function is as follows. Master enzyme that delivers sulfur to a number of partners involved in Fe-S cluster assembly, tRNA modification or cofactor biosynthesis. Catalyzes the removal of elemental sulfur atoms from cysteine to produce alanine. Functions as a sulfur delivery protein for Fe-S cluster synthesis onto IscU, an Fe-S scaffold assembly protein, as well as other S acceptor proteins. The chain is Cysteine desulfurase IscS from Helicobacter pylori (strain J99 / ATCC 700824) (Campylobacter pylori J99).